The chain runs to 707 residues: Transcription factor 12 (707 aa).

Positions 25-109 (AMFSPPVNSG…TPFMNSNLIG (85 aa)) are disordered. Composition is skewed to polar residues over residues 30–48 (PVNS…QFSG) and 56–76 (GTTS…SRGF). A phosphoserine mark is found at Ser-47, Ser-67, and Ser-79. The segment covering 81–93 (HYSDHLNDSRLGT) has biased composition (basic and acidic residues). The residue at position 98 (Ser-98) is a Phosphoserine. A Glycyl lysine isopeptide (Lys-Gly) (interchain with G-Cter in SUMO2) cross-link involves residue Lys-110. Ser-116 and Ser-124 each carry phosphoserine. The tract at residues 119-140 (LYSRDSGLSGCQSSLLRQDLGL) is leucine-zipper. 2 disordered regions span residues 140 to 222 (LGSP…SMFA) and 249 to 313 (FGGI…ASHT). Polar residues predominate over residues 144–163 (AQLSSSGKPGTPYYSFSATS). Lys-181 is covalently cross-linked (Glycyl lysine isopeptide (Lys-Gly) (interchain with G-Cter in SUMO2)). A compositionally biased stretch (low complexity) spans 256 to 269 (STSHMSQSSSYGSL). Over residues 282–306 (VSPTDINTSLPPMSSFHRGSTSSSP) the composition is skewed to polar residues. Thr-313 is subject to Phosphothreonine. The residue at position 333 (Ser-333) is a Phosphoserine. Disordered regions lie at residues 349–393 (PDHT…YENS) and 521–605 (HKTP…ERRM). A compositionally biased stretch (low complexity) spans 352–363 (TSSSFPSNPSTP). 2 stretches are compositionally biased toward polar residues: residues 364–377 (VGSP…TSQW) and 384–393 (APSSPSYENS). 2 stretches are compositionally biased toward basic and acidic residues: residues 543 to 555 (IKTE…ENLH) and 561 to 576 (DDMK…DIKV). Lys-544 participates in a covalent cross-link: Glycyl lysine isopeptide (Lys-Gly) (interchain with G-Cter in SUMO2). Phosphoserine is present on Ser-565. Lys-575 participates in a covalent cross-link: Glycyl lysine isopeptide (Lys-Gly) (interchain with G-Cter in SUMO2). Thr-582 bears the Phosphothreonine mark. Phosphoserine is present on residues Ser-583 and Ser-584. Residues 593–605 (PEQKIEREKERRM) are compositionally biased toward basic and acidic residues. A bHLH domain is found at 602–655 (ERRMANNARERLRVRDINEAFKELGRMCQLHLKSEKPQTKLLILHQAVAVILSL). Residues Lys-634 and Lys-678 each participate in a glycyl lysine isopeptide (Lys-Gly) (interchain with G-Cter in SUMO2) cross-link. Residues 657-680 (QQVRERNLNPKAACLKRREEEKVS) are class A specific domain. Positions 675–707 (EEEKVSAASAEPPTTLPGTHPGLSETTNPMGHL) are disordered. A compositionally biased stretch (low complexity) spans 686–697 (PPTTLPGTHPGL). Over residues 698-707 (SETTNPMGHL) the composition is skewed to polar residues.

In terms of assembly, efficient DNA binding requires dimerization with another bHLH protein. Forms homo- or heterooligomers with myogenin, E12 and ITF2 proteins. Interacts with PTF1. Interacts with RUNX1T1. Interacts with NEUROD2. Interacts with BHLHA9. In terms of tissue distribution, isoform gamma is highly expressed in lung, kidney, spleen, and is expressed at reduced levels in heart, muscle, liver, pituitary, brain and the trigeminal ganglion. The expression of isoform alpha predominates over isoform gamma in the pituitary and the brain.

It is found in the nucleus. Transcriptional regulator. Involved in the initiation of neuronal differentiation. Activates transcription by binding to the E box (5'-CANNTG-3'). May be involved in the functional network that regulates the development of the GnRH axis. The polypeptide is Transcription factor 12 (Tcf12) (Rattus norvegicus (Rat)).